The primary structure comprises 282 residues: Structure-specific endonuclease subunit slx1 (282 aa).

The GIY-YIG domain occupies G7–K97. The SLX1-type zinc finger occupies C191–C243.

Belongs to the SLX1 family. In terms of assembly, forms a heterodimer with slx4. A divalent metal cation is required as a cofactor.

Its subcellular location is the nucleus. Catalytic subunit of the slx1-slx4 structure-specific endonuclease that resolves DNA secondary structures generated during DNA repair and recombination. Has endonuclease activity towards branched DNA substrates, introducing single-strand cuts in duplex DNA close to junctions with ss-DNA. In Xenopus laevis (African clawed frog), this protein is Structure-specific endonuclease subunit slx1 (slx1a).